The sequence spans 354 residues: DNA-binding protein EMBP-1 (354 aa).

3 disordered regions span residues 1-24 (MASS…TPAQ), 106-193 (SAAG…RSAS), and 230-273 (EVNA…RKQQ). Composition is skewed to low complexity over residues 127 to 140 (SSSG…QGSS) and 232 to 245 (NAAA…SLSQ). Positions 246–265 (MDERELKRERRKQSNRESAR) are enriched in basic and acidic residues. Residues 250–313 (ELKRERRKQS…KTMETENKKL (64 aa)) enclose the bZIP domain. The basic motif stretch occupies residues 252–271 (KRERRKQSNRESARRSRLRK). A leucine-zipper region spans residues 278-299 (LAQKVSELTAANGTLRSELDQL).

The protein belongs to the bZIP family. As to quaternary structure, heterodimer.

Its subcellular location is the nucleus. Interacts specifically with the 8-bp sequence 5'-CACGTGGC-3'in the abscisic acid response element (ABARE). Also binds to the hexamer motif 5'-ACGTCA-3' of histone gene promoters. This is DNA-binding protein EMBP-1 from Triticum aestivum (Wheat).